The following is a 78-amino-acid chain: Acyl carrier protein (78 aa).

Residues 2–77 form the Carrier domain; sequence SSIEERVKKI…LAINYINENL (76 aa). Position 37 is an O-(pantetheine 4'-phosphoryl)serine (Ser-37).

This sequence belongs to the acyl carrier protein (ACP) family. Post-translationally, 4'-phosphopantetheine is transferred from CoA to a specific serine of apo-ACP by AcpS. This modification is essential for activity because fatty acids are bound in thioester linkage to the sulfhydryl of the prosthetic group.

The protein resides in the cytoplasm. It functions in the pathway lipid metabolism; fatty acid biosynthesis. In terms of biological role, carrier of the growing fatty acid chain in fatty acid biosynthesis. This is Acyl carrier protein from Saccharophagus degradans (strain 2-40 / ATCC 43961 / DSM 17024).